Here is a 270-residue protein sequence, read N- to C-terminus: Monofunctional glycosyltransferase (270 aa).

A disordered region spans residues 1-35 (MKRSDRYKTYNKPNDSNDSNQLHHNTYFKPVNKPQ). Over residues 11 to 24 (NKPNDSNDSNQLHH) the composition is skewed to polar residues. Residues 47–67 (LLIPILIIIGIIIGVMYALSL) form a helical membrane-spanning segment.

The protein belongs to the glycosyltransferase 51 family.

It localises to the cell membrane. The catalysed reaction is [GlcNAc-(1-&gt;4)-Mur2Ac(oyl-L-Ala-gamma-D-Glu-L-Lys-D-Ala-D-Ala)](n)-di-trans,octa-cis-undecaprenyl diphosphate + beta-D-GlcNAc-(1-&gt;4)-Mur2Ac(oyl-L-Ala-gamma-D-Glu-L-Lys-D-Ala-D-Ala)-di-trans,octa-cis-undecaprenyl diphosphate = [GlcNAc-(1-&gt;4)-Mur2Ac(oyl-L-Ala-gamma-D-Glu-L-Lys-D-Ala-D-Ala)](n+1)-di-trans,octa-cis-undecaprenyl diphosphate + di-trans,octa-cis-undecaprenyl diphosphate + H(+). The protein operates within cell wall biogenesis; peptidoglycan biosynthesis. Functionally, peptidoglycan polymerase that catalyzes glycan chain elongation using lipid-linked disaccharide-pentapeptide as the substrate. This chain is Monofunctional glycosyltransferase, found in Staphylococcus saprophyticus subsp. saprophyticus (strain ATCC 15305 / DSM 20229 / NCIMB 8711 / NCTC 7292 / S-41).